The following is a 576-amino-acid chain: Ecdysone receptor (576 aa).

The modulating stretch occupies residues 1 to 162 (MSLGARGYRR…GPAPRQQEEL (162 aa)). Residues 87–154 (CTMEQQQPQP…GEARRQKKGP (68 aa)) form a disordered region. The span at 91–106 (QQQPQPQQQPQQTQPL) shows a compositional bias: low complexity. Residues 107–117 (PSMPLPMPPTT) show a composition bias toward pro residues. 2 consecutive NR C4-type zinc fingers follow at residues 163-183 (CLVC…CEGC) and 199-223 (CKFG…LKKC). Residues 163–235 (CLVCGDRASG…VGMRPECVVP (73 aa)) constitute a DNA-binding region (nuclear receptor). The disordered stretch occupies residues 245–269 (EKKAQREKDKLPVSTTTVDDHMPPI). The NR LBD domain maps to 314-548 (NQKSLIARLV…FLEEIWDVAD (235 aa)).

It belongs to the nuclear hormone receptor family. NR1 subfamily.

The protein localises to the nucleus. In terms of biological role, receptor for ecdysone. Binds to ecdysone response elements (ECRES). This chain is Ecdysone receptor (EcR), found in Heliothis virescens (Tobacco budworm moth).